A 474-amino-acid polypeptide reads, in one-letter code: Phenolic acid decarboxylase (474 aa).

Positions 161, 182, and 224 each coordinate Mn(2+). Prenylated FMN-binding positions include 161–166 (NVGTYR) and 181–182 (MH). Glu273 functions as the Proton donor in the catalytic mechanism.

The protein belongs to the UbiD family. YclC subfamily. Prenylated FMN serves as cofactor. It depends on Mn(2+) as a cofactor.

The enzyme catalyses vanillate + H(+) = guaiacol + CO2. Involved in the non-oxidative decarboxylation and detoxification of phenolic derivatives under both aerobic and anaerobic conditions. Phenolic acid decarboxylase that catalyzes the reversible decarboxylation of vanillate. This is Phenolic acid decarboxylase from Streptomyces sp. (strain D7).